Consider the following 263-residue polypeptide: Triosephosphate isomerase (263 aa).

Residue 10-12 (NWK) coordinates substrate. His104 acts as the Electrophile in catalysis. Residue Glu176 is the Proton acceptor of the active site. Substrate is bound by residues Gly182, Ser221, and 242-243 (GG).

It belongs to the triosephosphate isomerase family. Homodimer.

It is found in the cytoplasm. The enzyme catalyses D-glyceraldehyde 3-phosphate = dihydroxyacetone phosphate. It participates in carbohydrate biosynthesis; gluconeogenesis. The protein operates within carbohydrate degradation; glycolysis; D-glyceraldehyde 3-phosphate from glycerone phosphate: step 1/1. Functionally, involved in the gluconeogenesis. Catalyzes stereospecifically the conversion of dihydroxyacetone phosphate (DHAP) to D-glyceraldehyde-3-phosphate (G3P). In Haemophilus influenzae (strain ATCC 51907 / DSM 11121 / KW20 / Rd), this protein is Triosephosphate isomerase.